Reading from the N-terminus, the 431-residue chain is Light-independent protochlorophyllide reductase subunit N (431 aa).

[4Fe-4S] cluster-binding residues include C29, C54, and C114.

It belongs to the BchN/ChlN family. As to quaternary structure, protochlorophyllide reductase is composed of three subunits; ChlL, ChlN and ChlB. Forms a heterotetramer of two ChlB and two ChlN subunits. The cofactor is [4Fe-4S] cluster.

It localises to the plastid. Its subcellular location is the chloroplast. It carries out the reaction chlorophyllide a + oxidized 2[4Fe-4S]-[ferredoxin] + 2 ADP + 2 phosphate = protochlorophyllide a + reduced 2[4Fe-4S]-[ferredoxin] + 2 ATP + 2 H2O. It participates in porphyrin-containing compound metabolism; chlorophyll biosynthesis (light-independent). Functionally, component of the dark-operative protochlorophyllide reductase (DPOR) that uses Mg-ATP and reduced ferredoxin to reduce ring D of protochlorophyllide (Pchlide) to form chlorophyllide a (Chlide). This reaction is light-independent. The NB-protein (ChlN-ChlB) is the catalytic component of the complex. This Nephroselmis olivacea (Green alga) protein is Light-independent protochlorophyllide reductase subunit N.